A 431-amino-acid chain; its full sequence is Glucose-1-phosphate adenylyltransferase (431 aa).

K39 serves as a coordination point for beta-D-fructose 1,6-bisphosphate. Residues R40, H46, and R52 each coordinate AMP. Residue Y114 coordinates alpha-D-glucose 1-phosphate. R130 is an AMP binding site. Alpha-D-glucose 1-phosphate contacts are provided by residues G179, 194-195, and S212; that span reads EK. AMP is bound by residues E370 and R386. Beta-D-fructose 1,6-bisphosphate contacts are provided by residues 419 to 423 and 429 to 431; these read REMLR and QER.

This sequence belongs to the bacterial/plant glucose-1-phosphate adenylyltransferase family. In terms of assembly, homotetramer.

It carries out the reaction alpha-D-glucose 1-phosphate + ATP + H(+) = ADP-alpha-D-glucose + diphosphate. It participates in glycan biosynthesis; glycogen biosynthesis. Its activity is regulated as follows. Allosterically activated by fructose-1,6-bisphosphate (F16BP) and inhibited by AMP. Functionally, involved in the biosynthesis of ADP-glucose, a building block required for the elongation reactions to produce glycogen. Catalyzes the reaction between ATP and alpha-D-glucose 1-phosphate (G1P) to produce pyrophosphate and ADP-Glc. The chain is Glucose-1-phosphate adenylyltransferase from Salmonella paratyphi C (strain RKS4594).